Consider the following 530-residue polypeptide: Protein transport protein SEC9 (530 aa).

A disordered region spans residues 1-274; it reads MGIKKMFQKK…QPANDYNLDL (274 aa). Over residues 8–22 the composition is skewed to basic and acidic residues; sequence QKKEPTEQEIREELS. Composition is skewed to low complexity over residues 61–100 and 122–141; these read NPYA…NNGG and GSSP…SSNP. Positions 142 to 160 are enriched in polar residues; that stretch reads YGNNNGSRSSQNTSSPYAK. Residues 161-202 are compositionally biased toward low complexity; that stretch reads STNNSSYSNSPYSGSTVNNGNRGGHSNNSNSSAGGNPYAAGG. Composition is skewed to polar residues over residues 203 to 228 and 258 to 268; these read RSSQ…RQTQ and RNQQSSQQPAN. 2 consecutive t-SNARE coiled-coil homology domains span residues 313–375 and 467–529; these read KFVK…VKEL and DDME…LNNI.

The protein belongs to the SNAP-25 family.

The protein resides in the membrane. Its function is as follows. Late secretory t-SNARE protein required for secretion and proper cytokinesis. Plays an important role in the secretion of virulence-associated extracellular enzymes and vesicle-mediated polarized hyphal growth. The chain is Protein transport protein SEC9 (SEC9) from Candida albicans (strain SC5314 / ATCC MYA-2876) (Yeast).